The sequence spans 366 residues: Chorismate synthase (366 aa).

NADP(+) contacts are provided by Arg48 and Arg54. FMN contacts are provided by residues 125 to 127 (RSS), 242 to 243 (NA), Gly287, 302 to 306 (KPTSS), and Arg328.

This sequence belongs to the chorismate synthase family. Homotetramer. The cofactor is FMNH2.

It carries out the reaction 5-O-(1-carboxyvinyl)-3-phosphoshikimate = chorismate + phosphate. It functions in the pathway metabolic intermediate biosynthesis; chorismate biosynthesis; chorismate from D-erythrose 4-phosphate and phosphoenolpyruvate: step 7/7. In terms of biological role, catalyzes the anti-1,4-elimination of the C-3 phosphate and the C-6 proR hydrogen from 5-enolpyruvylshikimate-3-phosphate (EPSP) to yield chorismate, which is the branch point compound that serves as the starting substrate for the three terminal pathways of aromatic amino acid biosynthesis. This reaction introduces a second double bond into the aromatic ring system. This Rhodospirillum rubrum (strain ATCC 11170 / ATH 1.1.1 / DSM 467 / LMG 4362 / NCIMB 8255 / S1) protein is Chorismate synthase.